The sequence spans 254 residues: Phosphoribosylaminoimidazole-succinocarboxamide synthase (254 aa).

Belongs to the SAICAR synthetase family.

It catalyses the reaction 5-amino-1-(5-phospho-D-ribosyl)imidazole-4-carboxylate + L-aspartate + ATP = (2S)-2-[5-amino-1-(5-phospho-beta-D-ribosyl)imidazole-4-carboxamido]succinate + ADP + phosphate + 2 H(+). It participates in purine metabolism; IMP biosynthesis via de novo pathway; 5-amino-1-(5-phospho-D-ribosyl)imidazole-4-carboxamide from 5-amino-1-(5-phospho-D-ribosyl)imidazole-4-carboxylate: step 1/2. This is Phosphoribosylaminoimidazole-succinocarboxamide synthase from Bartonella henselae (strain ATCC 49882 / DSM 28221 / CCUG 30454 / Houston 1) (Rochalimaea henselae).